Consider the following 468-residue polypeptide: Siroheme synthase (468 aa).

Residues 1-203 (MQYLPIFLNI…GQEEEAEGAL (203 aa)) are precorrin-2 dehydrogenase /sirohydrochlorin ferrochelatase. Residues 22–23 (TV) and 43–44 (PK) each bind NAD(+). Ser128 carries the phosphoserine modification. The uroporphyrinogen-III C-methyltransferase stretch occupies residues 216–468 (GEVYLVGAGP…VPDREPLDAR (253 aa)). Residue Pro225 participates in S-adenosyl-L-methionine binding. Asp248 serves as the catalytic Proton acceptor. The Proton donor role is filled by Lys270. Residues 301–303 (GGD), Ile306, 331–332 (TA), Met383, and Gly412 contribute to the S-adenosyl-L-methionine site.

The protein in the N-terminal section; belongs to the precorrin-2 dehydrogenase / sirohydrochlorin ferrochelatase family. This sequence in the C-terminal section; belongs to the precorrin methyltransferase family.

It catalyses the reaction uroporphyrinogen III + 2 S-adenosyl-L-methionine = precorrin-2 + 2 S-adenosyl-L-homocysteine + H(+). It carries out the reaction precorrin-2 + NAD(+) = sirohydrochlorin + NADH + 2 H(+). The enzyme catalyses siroheme + 2 H(+) = sirohydrochlorin + Fe(2+). Its pathway is cofactor biosynthesis; adenosylcobalamin biosynthesis; precorrin-2 from uroporphyrinogen III: step 1/1. It functions in the pathway cofactor biosynthesis; adenosylcobalamin biosynthesis; sirohydrochlorin from precorrin-2: step 1/1. It participates in porphyrin-containing compound metabolism; siroheme biosynthesis; precorrin-2 from uroporphyrinogen III: step 1/1. The protein operates within porphyrin-containing compound metabolism; siroheme biosynthesis; siroheme from sirohydrochlorin: step 1/1. Its pathway is porphyrin-containing compound metabolism; siroheme biosynthesis; sirohydrochlorin from precorrin-2: step 1/1. In terms of biological role, multifunctional enzyme that catalyzes the SAM-dependent methylations of uroporphyrinogen III at position C-2 and C-7 to form precorrin-2 via precorrin-1. Then it catalyzes the NAD-dependent ring dehydrogenation of precorrin-2 to yield sirohydrochlorin. Finally, it catalyzes the ferrochelation of sirohydrochlorin to yield siroheme. The polypeptide is Siroheme synthase (Nitrosococcus oceani (strain ATCC 19707 / BCRC 17464 / JCM 30415 / NCIMB 11848 / C-107)).